The following is a 95-amino-acid chain: Co-chaperonin GroES (95 aa).

The protein belongs to the GroES chaperonin family. In terms of assembly, heptamer of 7 subunits arranged in a ring. Interacts with the chaperonin GroEL.

The protein localises to the cytoplasm. Its function is as follows. Together with the chaperonin GroEL, plays an essential role in assisting protein folding. The GroEL-GroES system forms a nano-cage that allows encapsulation of the non-native substrate proteins and provides a physical environment optimized to promote and accelerate protein folding. GroES binds to the apical surface of the GroEL ring, thereby capping the opening of the GroEL channel. The protein is Co-chaperonin GroES of Marinobacter nauticus (strain ATCC 700491 / DSM 11845 / VT8) (Marinobacter aquaeolei).